A 53-amino-acid polypeptide reads, in one-letter code: Large ribosomal subunit protein eL40 (53 aa).

This sequence belongs to the eukaryotic ribosomal protein eL40 family.

The polypeptide is Large ribosomal subunit protein eL40 (Staphylothermus marinus (strain ATCC 43588 / DSM 3639 / JCM 9404 / F1)).